Reading from the N-terminus, the 225-residue chain is 2-C-methyl-D-erythritol 4-phosphate cytidylyltransferase (225 aa).

The protein belongs to the IspD/TarI cytidylyltransferase family. IspD subfamily.

It catalyses the reaction 2-C-methyl-D-erythritol 4-phosphate + CTP + H(+) = 4-CDP-2-C-methyl-D-erythritol + diphosphate. It participates in isoprenoid biosynthesis; isopentenyl diphosphate biosynthesis via DXP pathway; isopentenyl diphosphate from 1-deoxy-D-xylulose 5-phosphate: step 2/6. In terms of biological role, catalyzes the formation of 4-diphosphocytidyl-2-C-methyl-D-erythritol from CTP and 2-C-methyl-D-erythritol 4-phosphate (MEP). The protein is 2-C-methyl-D-erythritol 4-phosphate cytidylyltransferase of Clostridium perfringens (strain ATCC 13124 / DSM 756 / JCM 1290 / NCIMB 6125 / NCTC 8237 / Type A).